The sequence spans 430 residues: Trigger factor (430 aa).

The 86-residue stretch at 163 to 248 (GDTAVFDFAG…LHEVKTKQVP (86 aa)) folds into the PPIase FKBP-type domain.

Belongs to the FKBP-type PPIase family. Tig subfamily.

It localises to the cytoplasm. It carries out the reaction [protein]-peptidylproline (omega=180) = [protein]-peptidylproline (omega=0). Involved in protein export. Acts as a chaperone by maintaining the newly synthesized protein in an open conformation. Functions as a peptidyl-prolyl cis-trans isomerase. The polypeptide is Trigger factor (Exiguobacterium sp. (strain ATCC BAA-1283 / AT1b)).